The following is a 214-amino-acid chain: Ribonuclease HII (214 aa).

The RNase H type-2 domain occupies 26-214; that stretch reads EIVCGVDEAG…PVREAFDLIR (189 aa). Residues aspartate 32, glutamate 33, and aspartate 124 each contribute to the a divalent metal cation site.

Belongs to the RNase HII family. Mn(2+) is required as a cofactor. Requires Mg(2+) as cofactor.

The protein resides in the cytoplasm. It carries out the reaction Endonucleolytic cleavage to 5'-phosphomonoester.. In terms of biological role, endonuclease that specifically degrades the RNA of RNA-DNA hybrids. This Burkholderia pseudomallei (strain 1710b) protein is Ribonuclease HII.